A 1649-amino-acid polypeptide reads, in one-letter code: eIF-2-alpha kinase GCN2 (1649 aa).

The tract at residues 1–26 is disordered; that stretch reads MAGGRGAAGRGPAEPQESYSQRQDHE. The RWD domain maps to 25-137; that stretch reads HELQALEAIY…HHVQSFLSEH (113 aa). Residues 146–205 are a coiled coil; it reads HEEMLERQAQEKQQRLLEARQKEEQEQREILHEIQKRKEEIKEEKKRKEMAKQERLEITS. The interval 227–260 is disordered; the sequence is HGGSPDFVGNGKARAHSSGRSRRERQYSVCSGEA. The residue at position 230 (Ser-230) is a Phosphoserine. Positions 239-249 are enriched in basic residues; sequence ARAHSSGRSRR. Protein kinase domains follow at residues 296-539 and 590-1001; these read VYNA…HSFI and FEEL…SELL. ATP contacts are provided by residues 596–604 and Lys-619; that span reads LGKGAFGAV. The tract at residues 662–785 is disordered; that stretch reads PAVPGTPPPD…CNEKDSRHEI (124 aa). Thr-667 is subject to Phosphothreonine. Polar residues predominate over residues 705-721; it reads LSSSVEWSTSAERSNSA. Acidic residues-rich tracts occupy residues 731-740 and 754-764; these read SSDEEDEDER and SDSDIIFDNED. The Proton acceptor role is filled by Asp-847. Thr-870 is subject to Phosphothreonine. Residues Thr-899 and Thr-904 each carry the phosphothreonine; by autocatalysis modification. Residues 1022-1493 are histidyl-tRNA synthetase-like; it reads TDGKAYRTMM…DHVMQKLRTK (472 aa). N6-acetyllysine is present on Lys-1259.

Belongs to the protein kinase superfamily. Ser/Thr protein kinase family. GCN2 subfamily. As to quaternary structure, homodimer; homodimerization is important for kinase activation by uncharged tRNAs. Interacts with GCN1; this interaction stimulates EIF2AK4/GCN2 kinase activity and is impaired by IMPACT upon a variety of stress conditions, such as amino acid depletion, UV-C irradiation, proteasome inhibitor treatment and glucose deprivation. Interacts with DNAJC3; this interaction inhibits EIF2AK4/GCN2 kinase activity during endoplasmic reticulum (ER), hypothermic and amino acid-starving stress conditions. Interacts with MAP3K20; activates EIF2AK4/GCN2 kinase activity in response to moderate ribotoxic stress. Autophosphorylated; autophosphorylation on Thr-899 is increased upon amino acid starvation and in UV irradiation cells and inhibited in presence of IMPACT.

The protein localises to the cytoplasm. The enzyme catalyses L-seryl-[protein] + ATP = O-phospho-L-seryl-[protein] + ADP + H(+). It carries out the reaction L-threonyl-[protein] + ATP = O-phospho-L-threonyl-[protein] + ADP + H(+). In terms of biological role, metabolic-stress sensing protein kinase that phosphorylates the alpha subunit of eukaryotic translation initiation factor 2 (EIF2S1/eIF-2-alpha) in response to low amino acid availability. Plays a role as an activator of the integrated stress response (ISR) required for adaptation to amino acid starvation. EIF2S1/eIF-2-alpha phosphorylation in response to stress converts EIF2S1/eIF-2-alpha into a global protein synthesis inhibitor, leading to a global attenuation of cap-dependent translation, and thus to a reduced overall utilization of amino acids, while concomitantly initiating the preferential translation of ISR-specific mRNAs, such as the transcriptional activator ATF4, and hence allowing ATF4-mediated reprogramming of amino acid biosynthetic gene expression to alleviate nutrient depletion. Required for the translational induction of protein kinase PRKCH following amino acid starvation. Binds uncharged tRNAs. Involved in cell cycle arrest by promoting cyclin D1 mRNA translation repression after the unfolded protein response pathway (UPR) activation or cell cycle inhibitor CDKN1A/p21 mRNA translation activation in response to amino acid deprivation. Plays a role in the consolidation of synaptic plasticity, learning as well as formation of long-term memory. Plays a role in neurite outgrowth inhibition. Plays a role in feeding behavior to maintain amino acid homeostasis; contributes to the innate aversion toward diets of imbalanced amino acid composition. Plays a proapoptotic role in response to glucose deprivation. Promotes global cellular protein synthesis repression in response to UV irradiation independently of the stress-activated protein kinase/c-Jun N-terminal kinase (SAPK/JNK) and p38 MAPK signaling pathways. Plays a role in the antiviral response against alphavirus infection; impairs early viral mRNA translation of the incoming genomic virus RNA, thus preventing alphavirus replication. The chain is eIF-2-alpha kinase GCN2 from Rattus norvegicus (Rat).